The chain runs to 601 residues: Glutathione-regulated potassium-efflux system protein KefB (601 aa).

Helical transmembrane passes span 4–24, 29–49, 55–75, 87–107, 115–135, 152–172, 177–197, 207–227, 230–250, 268–288, 291–311, 324–344, and 356–376; these read SDFL…VPLA, IGAV…GLGF, EILH…GLEL, IFGV…GLLM, AAVV…LQLM, VLLF…LLAG, HFDW…LIGG, FIAA…LVLG, LFMD…GVLL, GLLL…GVLY, LLWV…VLYL, MQFA…FSSA, and ALLL…MKLV. An RCK N-terminal domain is found at 400–519; that stretch reads KPQVIVVGFG…AGVTQFSRET (120 aa).

It belongs to the monovalent cation:proton antiporter 2 (CPA2) transporter (TC 2.A.37) family. KefB subfamily. Interacts with the regulatory subunit KefG.

It is found in the cell inner membrane. Pore-forming subunit of a potassium efflux system that confers protection against electrophiles. Catalyzes K(+)/H(+) antiport. In Escherichia coli O127:H6 (strain E2348/69 / EPEC), this protein is Glutathione-regulated potassium-efflux system protein KefB.